The chain runs to 434 residues: Methylenetetrahydrofolate--tRNA-(uracil-5-)-methyltransferase TrmFO (434 aa).

10 to 15 is a binding site for FAD; the sequence is GAGLAG.

Belongs to the MnmG family. TrmFO subfamily. FAD serves as cofactor.

It is found in the cytoplasm. It carries out the reaction uridine(54) in tRNA + (6R)-5,10-methylene-5,6,7,8-tetrahydrofolate + NADH + H(+) = 5-methyluridine(54) in tRNA + (6S)-5,6,7,8-tetrahydrofolate + NAD(+). The enzyme catalyses uridine(54) in tRNA + (6R)-5,10-methylene-5,6,7,8-tetrahydrofolate + NADPH + H(+) = 5-methyluridine(54) in tRNA + (6S)-5,6,7,8-tetrahydrofolate + NADP(+). Catalyzes the folate-dependent formation of 5-methyl-uridine at position 54 (M-5-U54) in all tRNAs. The polypeptide is Methylenetetrahydrofolate--tRNA-(uracil-5-)-methyltransferase TrmFO (Bacillus cereus (strain AH820)).